We begin with the raw amino-acid sequence, 254 residues long: 5'-nucleotidase SurE (254 aa).

Residues aspartate 8, aspartate 9, serine 38, and asparagine 91 each contribute to the a divalent metal cation site.

Belongs to the SurE nucleotidase family. A divalent metal cation is required as a cofactor.

The protein localises to the cytoplasm. It catalyses the reaction a ribonucleoside 5'-phosphate + H2O = a ribonucleoside + phosphate. In terms of biological role, nucleotidase that shows phosphatase activity on nucleoside 5'-monophosphates. This is 5'-nucleotidase SurE from Anaeromyxobacter sp. (strain K).